We begin with the raw amino-acid sequence, 717 residues long: Pre-mRNA-splicing factor ATP-dependent RNA helicase DEAH10 (717 aa).

Residues 1–29 form a disordered region; the sequence is MPSMAQGELKSFVQNSRPNPKSPTVSPFS. The segment covering 12-29 has biased composition (polar residues); that stretch reads FVQNSRPNPKSPTVSPFS. Residues 51-256 form the Helicase ATP-binding domain; the sequence is VEEVQKNDIL…FGGAKAVHVQ (206 aa). 64 to 71 serves as a coordination point for ATP; sequence GETGSGKT. The DEAH box motif lies at 162-165; sequence DEAH. Residues 278-453 enclose the Helicase C-terminal domain; the sequence is TLVTIFQIHF…NIILQLKALG (176 aa).

Belongs to the DEAD box helicase family. DEAH subfamily. PRP22 sub-subfamily. Widely expressed but spatially and temporally regulated during development.

It is found in the nucleus. It localises to the nucleolus. It carries out the reaction ATP + H2O = ADP + phosphate + H(+). Functionally, involved in pre-mRNA splicing. Plays a role during development in processes such as meristem maintenance, leaf morphogenesis and root morphogenesis. This Arabidopsis thaliana (Mouse-ear cress) protein is Pre-mRNA-splicing factor ATP-dependent RNA helicase DEAH10.